The following is a 769-amino-acid chain: MQENYGASNIKVLKGLEAVRKRPGMYIGDTNIGGLHHMIYEVVDNSIDEAMAGHCDTIDVEITTEGSCIVSDNGRGIPVDMHPTENMPTLTVVLTVLHAGGKFDKDTYKVSGGLHGVGVSVVNALSKKLVATVERNGEIYRQEFSEGKVISEFGVIGKSKKTGTTIEFWPDDQIFEVTEFDYEILAKRFRELAYLNPKITINFKDNRVGKHESFHFEGGISQFVTDLNKKEALTKAIFFSVDEEDVNVEVALLYNDTYSENLLSFVNNIKTPDGGTHEAGFRMGLTRVISNYIEANASAREKDNKITGDDVREGLIAIVSVKVPEPQFEGQTKGKLGSTYVRPIVSKASFEYLTKYFEENPIEAKAIMNKALMAARGREAAKKARELTRKKESLSVGTLPGKLADCQSKDPSESEIYLVEGDSAGGSAKQGRERSFQAILPLRGKILNVEKARLDKILKSEQIQNMITAFGCGIGEDFDLSKLRYHKIIIMTDADVDGSHIQTLLLTFFFRFMNELVANGHIYLAQPPLYLYKKAKKQIYLKDEKALSEYLIETGIEGLNYEGIGMNDLKDYLKIVAAYRAILKDLEKRFNVISVIRYMIENSNLVKGNNEELFSVIKQFLETQGHNILNHYINENEIRAFVQTQNGLEELVINEELFTHPLYEEASYIFDKIKDRSLEFDKDILEVLEDVETNAKKGATIQRYKGLGEMNPEQLWETTMDPSVRRLLKITIEDAQSANDTFNLFMGDEVEPRRDYIQAHAKDVKHLDV.

The Toprim domain occupies 414-528 (SEIYLVEGDS…NGHIYLAQPP (115 aa)). 3 residues coordinate Mg(2+): Glu420, Asp493, and Asp495.

It belongs to the type II topoisomerase GyrB family. In terms of assembly, heterotetramer, composed of two GyrA and two GyrB chains. In the heterotetramer, GyrA contains the active site tyrosine that forms a transient covalent intermediate with DNA, while GyrB binds cofactors and catalyzes ATP hydrolysis. Mg(2+) is required as a cofactor. It depends on Mn(2+) as a cofactor. The cofactor is Ca(2+).

The protein resides in the cytoplasm. The catalysed reaction is ATP-dependent breakage, passage and rejoining of double-stranded DNA.. A type II topoisomerase that negatively supercoils closed circular double-stranded (ds) DNA in an ATP-dependent manner to modulate DNA topology and maintain chromosomes in an underwound state. Negative supercoiling favors strand separation, and DNA replication, transcription, recombination and repair, all of which involve strand separation. Also able to catalyze the interconversion of other topological isomers of dsDNA rings, including catenanes and knotted rings. Type II topoisomerases break and join 2 DNA strands simultaneously in an ATP-dependent manner. The polypeptide is DNA gyrase subunit B (Campylobacter jejuni subsp. jejuni serotype O:2 (strain ATCC 700819 / NCTC 11168)).